A 1310-amino-acid chain; its full sequence is MDTPPMQRSTPQRAGSPDTLELMDLLDAAAAAAEHRARVVTSSQPDDLLFGENGVMVGREHEIVSIPSVSGLQPEPRTEDVGEELTQDDYVCEDGQDLMGSPVIPLAEVFHTRFSEAGAREPTGADRSLETVSLGTKLARSPKPPMNDGETGRGTTPPFPQAFSPVSPASPVGDAAGNDQREDQRSIPRQTTRGNSPGLPSVVHRDRQTQSISGKKPGDEQAGHAHASGDGVVLQKTQRPAQGKSPKKKTLKVKVPLPARKPGGPVPGPVEQLYHVLSDSVPAKGAKADLPFETDDTRPRKHDARGITPRVPGRSSGGKPRAFLALPGRSHAPDPIEDDSPVEKKPKSREFVSSSSSSSSWGSSSEDEDDEPRRVSVGSETTGSRSGREHAPSPSNSDDSDSNDGGSTKQNIQPGYRSISGPDPRIRKTKRLAGEPGRQRQKSFSLPRSRTPIIPPVSGPLMMPDGSPWPGSAPLPSNRVRFGPSGETREGHWEDEAVRAARARYEASTEPVPLYVPELGDPARQYRALINLIYCPDRDPIAWLQNPKLTGVNSALNQFYQKLLPPGRAGTAVTGSVASPVPHVGEAMATGEALWALPHAAAAVAMSRRYDRAQKHFILQSLRRAFASMAYPEATGSSPAARISRGHPSPTTPATQAPDPQPSAAARSLSVCPPDDRLRTPRKRKSQPVESRSLLDKIRETPVADARVADDHVVSKAKRRVSEPVTITSGPVVDPPAVITMPLDGPAPNGGFRRIPRGALHTPVPSDQARKAYCTPETIARLVDDPLFPTAWRPALSFDPGALAEIAARRPGGGDRRFGPPSGVEALRRRCAWMRQIPDPEDVRLLIIYDPLPGEDINGPLESTLATDPGPSWSPSRGGLSVVLAALSNRLCLPSTHAWAGNWTGPPDVSALNARGVLLLSTRDLAFAGAVEYLGSRLASARRRLLVLDAVALERWPRDGPALSQYHVYVRAPARPDAQAVVRWPDSAVTEGLARAVFASSRTFGPASFARIETAFANLYPGEQPLCLCRGGNVAYTVCTRAGPKTRVPLSPREYRQYVLPGFDGCKDLARQSRGLGLGAADFVDEAAHSHRAANRWGLGAALRPVFLPEGRRPGAAGPEAGDVPTWARVFCRHALLEPDPAAEPLVLPPVAGRSVALYASADEARNALPPIPRVMWPPGFGAAETVLEGSDGTRFVFGHHGGSERPSETQAGRQRRTADDREHALELDDWEVGCEDAWDSEEGGGDDGDAPGSSFGVSIVSVAPGVLRDRRVGLRPAVKVELLSSSSSSEDEDDVWGGRGGRSPPQSRG.

Disordered regions lie at residues 117–271 (AGAR…GPVE), 285–454 (GAKA…TPII), and 636–697 (GSSP…LLDK). A compositionally biased stretch (basic and acidic residues) spans 341–350 (PVEKKPKSRE). Low complexity-rich tracts occupy residues 351–364 (FVSSSSSSSSWGSS), 392–407 (PSPSNSDDSDSNDGGS), and 648–666 (PSPTTPATQAPDPQPSAAA). The Nuclear localization signal signature appears at 677–685 (RLRTPRKRK). 2 positions are modified to phosphoserine; by viral VZV ORF66: S686 and S722. 2 disordered regions span residues 1193–1258 (GTRF…SFGV) and 1282–1310 (ELLSSSSSSEDEDDVWGGRGGRSPPQSRG). Basic and acidic residues predominate over residues 1217–1227 (RTADDREHALE). Residues 1228–1250 (LDDWEVGCEDAWDSEEGGGDDGD) show a composition bias toward acidic residues.

This sequence belongs to the herpesviridae ICP4 family. In terms of assembly, interacts with IE4 and IE63. Interacts with host USF1 and SP1. In terms of processing, phosphorylated by ORF66 protein kinase on Ser-686 and Ser-722. Also phosphorylated by ORF47 protein kinase and by human CSNK2A1/CKII.

Its subcellular location is the host nucleus. The protein resides in the host cytoplasm. It is found in the virion tegument. Functionally, transcriptional transactivator. May interact with and recruit specific components of the general transcription machinery to viral promoters and stabilize their formation for transcription initiation. Negatively regulates its own transcription. This immediate early (EI) protein may be necessary in virion for viral pathogenesis. This Homo sapiens (Human) protein is Major viral transcription factor ICP4 homolog.